The primary structure comprises 425 residues: Histidine--tRNA ligase (425 aa).

This sequence belongs to the class-II aminoacyl-tRNA synthetase family. As to quaternary structure, homodimer.

The protein resides in the cytoplasm. It carries out the reaction tRNA(His) + L-histidine + ATP = L-histidyl-tRNA(His) + AMP + diphosphate + H(+). In Listeria monocytogenes serotype 4b (strain F2365), this protein is Histidine--tRNA ligase.